The primary structure comprises 242 residues: Spiralin (242 aa).

An N-terminal signal peptide occupies residues 1–23 (MKKLLSILAVFGVSAVGTTSVVA). A lipid anchor (N-palmitoyl cysteine) is attached at Cys24. Cys24 is lipidated: S-diacylglycerol cysteine.

It belongs to the spiralin family. Seems to occur as dimer, tetramers, and large oligomers of identical chains. Palmitate and stearate are the major lipid components.

It is found in the cell membrane. Functionally, major membrane protein of spiroplasma. This is Spiralin (spi) from Spiroplasma melliferum.